Here is a 213-residue protein sequence, read N- to C-terminus: tRNA (guanine-N(7)-)-methyltransferase (213 aa).

Glu44, Asp69, Asp96, and Asp118 together coordinate S-adenosyl-L-methionine. Asp118 is an active-site residue. Lys122 contributes to the substrate binding site. Residues 124 to 129 (RHEKRR) form an interaction with RNA region. Substrate is bound by residues Asp154 and 191–194 (TEYE).

It belongs to the class I-like SAM-binding methyltransferase superfamily. TrmB family.

The catalysed reaction is guanosine(46) in tRNA + S-adenosyl-L-methionine = N(7)-methylguanosine(46) in tRNA + S-adenosyl-L-homocysteine. Its pathway is tRNA modification; N(7)-methylguanine-tRNA biosynthesis. Functionally, catalyzes the formation of N(7)-methylguanine at position 46 (m7G46) in tRNA. This Streptococcus thermophilus (strain CNRZ 1066) protein is tRNA (guanine-N(7)-)-methyltransferase.